The primary structure comprises 448 residues: Vacuolar amino acid transporter 6 (448 aa).

Residues 1–7 lie on the Cytoplasmic side of the membrane; the sequence is MVASIRS. Residues 8–28 traverse the membrane as a helical segment; sequence GVLTLLHTACGAGILAMPYAF. Residues 29–32 are Vacuolar-facing; sequence KPFG. Residues 33-53 form a helical membrane-spanning segment; the sequence is LIPGVIMIVLCGACAMQSLFI. Over 54 to 80 the chain is Cytoplasmic; that stretch reads QARVAKYVPQGRASFSALTRLINPNLG. Residues 81–101 form a helical membrane-spanning segment; that stretch reads IVFDLAIAIKCFGVGVSYMIV. Residues 102–125 lie on the Vacuolar side of the membrane; the sequence is VGDLMPQIMSVWTRNAWLLNRNVQ. Residues 126 to 146 traverse the membrane as a helical segment; the sequence is ISLIMLFFVAPLSFLKKLNSL. The Cytoplasmic segment spans residues 147–150; that stretch reads RYAS. A helical membrane pass occupies residues 151 to 171; sequence MVAISSVAYLCVLVLLHYVAP. The Vacuolar segment spans residues 172–195; the sequence is SDEILRLKGRISYLLPPQSHDLNV. Residues 196-216 form a helical membrane-spanning segment; it reads LNTLPIFVFAYTCHHNMFSII. Topologically, residues 217–229 are cytoplasmic; the sequence is NEQRSSRFEHVMK. Residues 230–250 traverse the membrane as a helical segment; the sequence is IPLIAISLALILYIAIGCAGY. Over 251 to 267 the chain is Vacuolar; it reads LTFGDNIIGNIIMLYPQ. Residues 268 to 288 traverse the membrane as a helical segment; that stretch reads AVSSTIGRIAIVLLVMLAFPL. Over 289-357 the chain is Cytoplasmic; the sequence is QCHPARASIH…PKETPLRGKS (69 aa). The residue at position 344 (Ser-344) is a Phosphoserine. Residues 358–378 form a helical membrane-spanning segment; that stretch reads FIVITCSILVASYLVAISVSS. Residues 379–381 are Vacuolar-facing; that stretch reads LAR. A helical transmembrane segment spans residues 382 to 402; the sequence is VLAIVGATGSTSISFILPGLF. The Cytoplasmic segment spans residues 403–424; it reads GYKLIGTEHKTAVPLTTKIFKY. A helical transmembrane segment spans residues 425-445; sequence TGLLLFIWGLIIMITCLTAAL. Residues 446 to 448 lie on the Vacuolar side of the membrane; sequence KLN.

Belongs to the amino acid/polyamine transporter 2 family.

The protein localises to the vacuole membrane. Its function is as follows. Involved in amino acid efflux from the vacuole to the cytoplasm. Capable of transporting aspartate and glutamate. Requires ATP for function. This chain is Vacuolar amino acid transporter 6 (AVT6), found in Saccharomyces cerevisiae (strain ATCC 204508 / S288c) (Baker's yeast).